The chain runs to 70 residues: MAVPKKKTSPSRRGMRRSHQALTGEAYTECSNCGELKRPHHVCGHCGHYDGREVAAAGNSGRGLKGVVRV.

Basic residues predominate over residues 1 to 19 (MAVPKKKTSPSRRGMRRSH). Residues 1-21 (MAVPKKKTSPSRRGMRRSHQA) are disordered.

It belongs to the bacterial ribosomal protein bL32 family.

In Granulibacter bethesdensis (strain ATCC BAA-1260 / CGDNIH1), this protein is Large ribosomal subunit protein bL32.